Reading from the N-terminus, the 734-residue chain is Photosystem I P700 chlorophyll a apoprotein A2 (734 aa).

Transmembrane regions (helical) follow at residues 46-69 (IFAS…FHVA), 135-158 (LYAG…LHLQ), 175-199 (LNHH…HVAI), 273-291 (IAHH…GHMY), 330-353 (LHFQ…QHLY), 369-395 (AALY…IFFV), 417-439 (AIIS…LYVH), and 517-535 (FLVH…LILV). [4Fe-4S] cluster contacts are provided by cysteine 559 and cysteine 568. 2 helical membrane passes run 575 to 596 (AFYL…YWHW) and 643 to 665 (LSVW…MFLI). Chlorophyll a is bound by residues histidine 654, methionine 662, and tyrosine 670. Tryptophan 671 is a binding site for phylloquinone. The helical transmembrane segment at 707 to 727 (LVGLVHFSVGYVLTYAAFVIA) threads the bilayer.

Belongs to the PsaA/PsaB family. The PsaA/B heterodimer binds the P700 chlorophyll special pair and subsequent electron acceptors. PSI consists of a core antenna complex that captures photons, and an electron transfer chain that converts photonic excitation into a charge separation. The eukaryotic PSI reaction center is composed of at least 11 subunits. It depends on P700 is a chlorophyll a/chlorophyll a' dimer, A0 is one or more chlorophyll a, A1 is one or both phylloquinones and FX is a shared 4Fe-4S iron-sulfur center. as a cofactor.

It is found in the plastid. It localises to the chloroplast thylakoid membrane. The enzyme catalyses reduced [plastocyanin] + hnu + oxidized [2Fe-2S]-[ferredoxin] = oxidized [plastocyanin] + reduced [2Fe-2S]-[ferredoxin]. Its function is as follows. PsaA and PsaB bind P700, the primary electron donor of photosystem I (PSI), as well as the electron acceptors A0, A1 and FX. PSI is a plastocyanin/cytochrome c6-ferredoxin oxidoreductase, converting photonic excitation into a charge separation, which transfers an electron from the donor P700 chlorophyll pair to the spectroscopically characterized acceptors A0, A1, FX, FA and FB in turn. Oxidized P700 is reduced on the lumenal side of the thylakoid membrane by plastocyanin or cytochrome c6. The sequence is that of Photosystem I P700 chlorophyll a apoprotein A2 from Cyanidium caldarium (Red alga).